Reading from the N-terminus, the 306-residue chain is Protein SEC13 homolog (306 aa).

6 WD repeats span residues 11-50 (QHRD…QSYP), 56-97 (GHNG…WQKT), 102-143 (THEA…QQWQ), 150-195 (CHDQ…NEWT), 202-245 (CHKD…TAEW), and 252-291 (QAPC…QWIK).

It belongs to the WD repeat SEC13 family. Probably part of the GATOR complex.

The protein resides in the cytoplasmic vesicle. It localises to the COPII-coated vesicle membrane. Its subcellular location is the endoplasmic reticulum membrane. The protein localises to the nucleus. It is found in the nuclear pore complex. The protein resides in the lysosome membrane. Functionally, functions as a component of the nuclear pore complex (NPC) and the COPII coat. In terms of biological role, as a component of the GATOR complex may function in the amino acid-sensing branch of the TORC1 signaling pathway. This chain is Protein SEC13 homolog, found in Caenorhabditis briggsae.